A 429-amino-acid polypeptide reads, in one-letter code: Serine hydroxymethyltransferase (429 aa).

Position 120 to 122 (120 to 122) interacts with (6S)-5,6,7,8-tetrahydrofolate; that stretch reads GHI. Lysine 226 bears the N6-(pyridoxal phosphate)lysine mark.

This sequence belongs to the SHMT family. Homodimer. The cofactor is pyridoxal 5'-phosphate.

The protein localises to the cytoplasm. It functions in the pathway amino-acid biosynthesis; glycine biosynthesis; glycine from L-serine: step 1/1. In terms of biological role, catalyzes the reversible interconversion of serine and glycine with a modified folate serving as the one-carbon carrier. Also exhibits a pteridine-independent aldolase activity toward beta-hydroxyamino acids, producing glycine and aldehydes, via a retro-aldol mechanism. This is Serine hydroxymethyltransferase from Pyrobaculum arsenaticum (strain DSM 13514 / JCM 11321 / PZ6).